A 120-amino-acid chain; its full sequence is UPF0091 protein PH1455 (120 aa).

The protein belongs to the UPF0091 family.

The polypeptide is UPF0091 protein PH1455 (Pyrococcus horikoshii (strain ATCC 700860 / DSM 12428 / JCM 9974 / NBRC 100139 / OT-3)).